We begin with the raw amino-acid sequence, 142 residues long: Putative pre-16S rRNA nuclease (142 aa).

This sequence belongs to the YqgF nuclease family.

The protein resides in the cytoplasm. In terms of biological role, could be a nuclease involved in processing of the 5'-end of pre-16S rRNA. This chain is Putative pre-16S rRNA nuclease, found in Lactobacillus helveticus (strain DPC 4571).